The primary structure comprises 140 residues: GTP-dependent dephospho-CoA kinase (140 aa).

The GTP site is built by D21, V22, V23, D40, K42, and E92.

This sequence belongs to the GTP-dependent DPCK family.

The enzyme catalyses 3'-dephospho-CoA + GTP = GDP + CoA + H(+). It functions in the pathway cofactor biosynthesis; coenzyme A biosynthesis. Functionally, catalyzes the GTP-dependent phosphorylation of the 3'-hydroxyl group of dephosphocoenzyme A to form coenzyme A (CoA). In Pyrobaculum aerophilum (strain ATCC 51768 / DSM 7523 / JCM 9630 / CIP 104966 / NBRC 100827 / IM2), this protein is GTP-dependent dephospho-CoA kinase.